A 268-amino-acid polypeptide reads, in one-letter code: Interleukin-1 beta (268 aa).

Residues 1–116 (MAEVPELASE…TRNNDACVHD (116 aa)) constitute a propeptide that is removed on maturation.

This sequence belongs to the IL-1 family. As to quaternary structure, monomer. In its precursor form, weakly interacts with full-length MEFV; the mature cytokine does not interact at all. Interacts with integrins ITGAV:ITGBV and ITGA5:ITGB1; integrin-binding is required for IL1B signaling. Interacts with cargo receptor TMED10; the interaction is direct and is required for the secretion of IL1B mature form. Interacts with HSP90AB1; the interaction facilitates cargo translocation into the ERGIC. Interacts with HSP90B1; the interaction facilitates cargo translocation into the ERGIC.

The protein localises to the cytoplasm. The protein resides in the cytosol. It localises to the secreted. Its subcellular location is the lysosome. It is found in the extracellular exosome. Functionally, potent pro-inflammatory cytokine. Initially discovered as the major endogenous pyrogen, induces prostaglandin synthesis, neutrophil influx and activation, T-cell activation and cytokine production, B-cell activation and antibody production, and fibroblast proliferation and collagen production. Promotes Th17 differentiation of T-cells. Synergizes with IL12/interleukin-12 to induce IFNG synthesis from T-helper 1 (Th1) cells. Plays a role in angiogenesis by inducing VEGF production synergistically with TNF and IL6. Involved in transduction of inflammation downstream of pyroptosis: its mature form is specifically released in the extracellular milieu by passing through the gasdermin-D (GSDMD) pore. This is Interleukin-1 beta (IL1B) from Macaca fascicularis (Crab-eating macaque).